We begin with the raw amino-acid sequence, 5098 residues long: MADDLANLCRFLFDDTAFPSLSSSASSDLFSRRLRSDDSIKRGLRSFYLLLRWGVAPIGGDDADSSGKLRFETWSDSQLQALVSISQAILLLSRSLLGTDLTLNQGLVDQLEPIVLGVIQEVMEFSLSFLEKSSFRQNDLKMEINMEILLEIASFDGSEKQYDILPDFSPAEVAELWPAFSGEHDNMDAQSLVKCTFQGGRCSNEEKPVDRLLITLMSECIESDVQAQSVVKSPFQQDCGDLNPFTRHLAVVHLRCVCRLIMVCKELVQLPNMLDEKTVDQAVLDKLSFCLRILKLLGSLSKDVQSIENDGSLLQAVASFTDAFPKLFRVFFEFTNHTATEGNIESLSLALVEGFLNLVQLIFGKSSVFQNVQACVAASIVSNLDSSVWRYDGSSCNLTPPLAYFPRSVIYTLKLIQDLKRQPYHIHDLRVLESEVTYEDVSSTVDSVYFHLRQEKIPLLKCFTVEDIMRVIFPSSSQWMDNFFHLVYFLHREGVKLRPKVERTYSSLRSNSFAEVESQISHDDEALFGNLFSEGSRSLCSIEPNDQPPVSVSSNLLLQAAKELLNFLRACILCQEWVPSIYEDGCKKLDTGHIDILLNIVGCSIEDKASDGGCMLQDEGRPGHVAFELLLNLLRSRALSDFLESYLFQQILVVENSDFNYNDKTLALLAHTLLCRPGLAGAQLRAKIYDGFVSFVTERARGICAEALSLKELTACLPSAFHIEILLMAFHLSNEAEKAKFSNLIASCLHKVDTPAGICDGPQLSSWAMLISRLLVLLHHMLLHPNTCPTSLMLDLRSKLREVRSCGSNLHVTVGDHLSSWASLVARGITDSWAEDESVSHLMSQMIDFSPHPPTFQNDVSTAKTLNLDYGDLSASLCRVLGLWKGKKAGKVEDLLVERYIFMLSSDIARINCALDSQPSLHVNYQNVDISNSVDLISTSHLLVGDINVVGRNIELRNILIGVLNQLQAAPEQVVEDLGWDYIREGAWLSLLLYFLDGGVWDYCNKNSCSEIDPFWKECTSVDAKYVAAAEGVVSYLMKTGDIAELLRMLSSLVGKYLRVYKKAFLATFSDWNHHGHSSPSLLLLKHTQFGKSLQGEYAKIGDNSLHLQCIFYLSKLDSLGDGRGSGVLWKVFWEFMVHGFPTSLQTSSAILLSCILSIRCIVLTINGLLKLGNSKEKFGVDTSVLHQLLDSIMIIKFDQVFESFHGKCEEIHQNICAVLQLPDLTELFLMKDMEGFVRDISAEQIDRSQVLEGVITKIVDVMDSLSKDSSKSDIFKFYLGVDAVSEHTREFYELQRGDLSVFIDSLDYCSLEPVNIKVLNFLVDLLSVAQSPDLRRRVQQKFIDMDLISLSGWLERRLLGSFVEEIDGKKTAKGNSLPFREAAMNFINCLVSSTNDLQTRELQNHLFEALLISLDTAFLSFDIHMSMSYFHFVLQLAREDNLMKMVLKRTIMLMEKLAAEEKLLPGLKFIFGVIGTLLSNRSPSHGESLCGKSLASYKNTATGPLVPKLSGTTKKSDTLALPVDQEGSSISLECDVTSVDEDEDDGTSDGEVASLDKEDEEDANSERYLASKVCTFTSSGSNFMEQHWYFCYTCDLTVSKGCCSVCAKVCHRGHRVVYSRSSRFFCDCGAGGVRGSSCQCLKPRKYNGNGSAPARGTNNFQSFLPLSEDADQLGESDSDVEEDGFGEENHVVLYIPKETQYKMSLLLEELGIEDRVLELFSSLLPSITSKRDSGLSKEKQVNLGKDKVLSFDTDLLQLKKAYKSGSLDLKIKADYTNSKDLKSLLANGSLVKSLLSVSVRGRLAVGEGDKVAIFDVGQLIGQATIAPINADKANVKPLSRNIVRFEIVHLSFNPVVENYLAVAGLEDCQILTLNHRGEVIDRLAVELALQGAFIRRIDWVPGSQVQLMVVTNKFVKIYDLSQDSISPTQYFTLPNDMIVDATLFVASRGRVFLLVLSEQGNLYRFELSWGGNAGATPLKEIVQIMGKDVTGKGSSVYFSPTYRLLFISYHDGSSFMGRLSSDATSLTDTSGMFEEESDCKQRVAGLHRWKELLAGSGLFICFSSVKSNAVLAVSLRGDGVCAQNLRHPTGSSSPMVGITAYKPLSKDNVHCLVLHDDGSLQIYSHVRSGVDTDSNFTAEKVKKLGSKILNNKTYAGAKPEFPLDFFERAFCITADVRLGSDAIRNGDSEGAKQSLASEDGFIESPSPVGFKISVSNPNPDIVMVGIRMHVGTTSASSIPSEVTIFQRSIKMDEGMRCWYDIPFTVAESLLADEDVVISVGPTTSGTALPRIDSLEVYGRAKDEFGWKEKMDAVLDMEARVLGHGLLLPGSSKKRALAQSASMEEQVIADGLKLLSIYYSVCRPRQEVVLSELKCKQLLETIFESDRETLLQTTACRVLQSVFPRKEIYYQVMFLPNSVKDTMRLLGVVKVTSILSSRLGILGTGGSIVEEFNAQMRAVSKVALTRKSNFSVFLEMNGSEVVDNLMQVLWGILESEPLDTPTMNNVVMSSVELIYSYAECLASQGKDTGVHSVAPAVQLLKALMLFPNESVQTSSRCVLVLAISSRLLQVPFPKQTMLTTDDLVDNVTTPSVPIRTAGGNTHVMIEEDSITSSVQYCCDGCSTVPILRRRWHCTVCPDFDLCEACYEVLDADRLPPPHTRDHPMTAIPIEVESLGADTNEIQFSADEVGISNMLPVVTSSIPQASTPSIHVLEPGESAEFSASLTDPISISASKRAVNSLILSEFLQELSGWMETVSGVQAIPVMQLFYRLSSAIGGAFMDSSKPEEISLDKLIKWLLGEINLSKPFAASTRSSLGEIVILVFMFFTLMLRSWHQPGSDGSSSKLGGSTDVHDRRIVQSSTVVATQSSLHVQERDDFASQLVRACSCLRNQEFVNYLMNILQQLVHVFKSRAANVEARGSSSGSGCGAMLTVRRDLPAGNYSPFFSDSYAKAHRADIFVDYHRLLLENVFRLVYTLVRPEKQEKMGEKEKVYRNASSKDLKLDGFQDVLCSYINNPHTAFVRRYARRLFLHLCGSKTQYYSVRDSWQFSNEVKNLYKHVEKSGGFENNVSYERSVKIVKSLSTIAEVAVARPRNWQKYCLRHGDFLSFLLNGVFHFAEESVIQTLKLLNLAFYQGKDVSSSVQKAEATEVVTGSNRSGSQSVDSKKKKKGEDGHDSGLEKLYVDMEGVVDIFSANCGDLLRQFIDFFLLEWNSSSVRTEAKSVIYGLWHHGRHSFKESLLAALLQKVRYLPAYGQNIVEYTELVSLLLDKAPENNSKQAINELVDRCLNPDVIRCFFETLHSQNELIANHPNSRIYSTLGNLVEFDGYYLESEPCVACSSPDVPYSKMKLESLKSETKFTDNRIIVKCTGSYTIQSVTMNVHDARKSKSVKVLNLYYNNRPVSDLSELKNNWSLWKRAKSCHLSFNQTELKVEFPIPITACNFMIELDSFYENLQALSLEPLQCPRCSRPVTDKHGICSNCHENAYQCRQCRNINYENLDSFLCNECGYSKYGRFEFNFMAKPSFIFDNMENDEDMKKGLAAIESESENAHKRYQQLLGFKKPLLKIVSSIGETEMDSQHKDTVQQMMASLPGPSCKINRKIALLGVLYGEKCKAAFDSVSKSVQTLQGLRRVLMSYLHQKNSNFSSGASRCVVSKTPNNCYGCATTFVTQCLEILQVLSKHPRSRKQLVAAGILSELFENNIHQGPKTARAQARAALSTFSEGDLSAVNELNNLVQKKIMYCLEHHRSMDIALATREEMLLLSEVCSLTDEFWESRLRLVFQLLFSSIKLGAKHPAISEHIILPCLKIISVACTPPKPDTAEKEQTMGKSAPAVQEKDENAAGVIKYSSESEENNLNVSQKTRDIQLVSYLEWEKGASYLDFVRRQYKASQSIRGASQKSRTHRSDFLALKYTLRWKRRSSRTSKGGLQAFELGSWVTELILSACSQSIRSEMCTLISLLAAQSSPRRYRLINLLIGLLPATLAAGESSAEYFELLFKMIETQDALLFLTVRGCLTTICKLISQEVGNIESLERSLQIDISQGFTLHKLLELLGKFLEVPNIRSRFMRDNLLSHVLEALIVIRGLIVQKTKLINDCNRRLKDLLDGLLLESSENKRQFIRACVSGLQTHAEENKGRTCLFILEQLCNLICPSKPEAVYMLILNKSHTQEEFIRGSMTKNPYSSAEIGPLMRDVKNKICQQLDLLGLLEDDYGMELLVAGNIISLDLSIAQVYELVWKKSNQSSTSLTNSALLASNAAPSRDCPPMTVTYRLQGLDGEATEPMIKELEEDREESQDPEIEFAIAGAVREYGGLEILLDMIKSLQDDFKSNQEEMVAVLDLLNHCCKIRENRRALLRLGALSLLLETARRAFSVDAMEPAEGILLIVESLTLEANESDSISAAQSALTVSNEETGTWEQAKKIVLMFLERLSHPSGLKKSNKQQRNTEMVARILPYLTYGEPAAMEALIEHFSPYLQNWSEFDQLQQRHEEDPKDDSIAQQAAKQRFTVENFVRVSESLKTSSCGERLKDIVLENGIIAVAVKHIKEIFAITGQTGFKSSKEWLLALKLPSVPLILSMLRGLSMGHLPTQTCIDEGGILTLLHALEGVSGENDIGARAENLLDTLADKEGKGDGFLGEKVRALRDATKDEMRRRALRKREELLQGLGMRQELSSDGGERIVVSQPILEGFEDVEEEEDGLACMVCREGYKLRPSDLLGVYSYSKRVNLGVGNSGSARGECVYTTVSYFNIIHFQCHQEAKRADAALKNPKKEWEGAMLRNNESLCNSLFPVKGPSVPLAQYLRYVDQYWDNLNALGRADGSRLRLLTYDIVLMLARFATGASFSADCRGGGRDSNSRFLPFMFQMARHLLDQGGPVQRTNMARSVSSYISSSSTSTATAPSSDSRPLTPGSQLSSTGTEETVQFMMVNSLLSESYESWLQHRRVFLQRGIYHTFMQHAHGRVASRAAEPTSSGGKTQDAETLTGDELLSIVKPMLVYTGMIEQLQQLFKPKKPVHIEPIKKEGTSSGVELEPWEIVMKEKLLNVKEMIGFSKELISWLDEINSATDLQEAFDIVGVLADVLSEGVTQCDQFVRSAIDKD.

Position 2 is an N-acetylalanine (alanine 2). The next 2 membrane-spanning stretches (helical) occupy residues alanine 1150–leucine 1170 and leucine 1458–leucine 1478. The span at serine 1539–serine 1549 shows a compositional bias: acidic residues. The segment at serine 1539–glutamate 1562 is disordered. The UBR-type zinc finger occupies lysine 1573 to proline 1644. A ZZ-type zinc finger spans residues serine 2613–glutamate 2672. 8 residues coordinate Zn(2+): cysteine 2618, cysteine 2621, cysteine 2633, cysteine 2636, cysteine 2642, cysteine 2645, histidine 2658, and histidine 2662. The chain crosses the membrane as a helical span at residues serine 2813 to tryptophan 2833. The segment at glutamate 3149–histidine 3174 is disordered. Residues valine 3151–valine 3162 show a composition bias toward polar residues. The MYND-type; degenerate zinc-finger motif lies at cysteine 3464–cysteine 3504. Coiled coils occupy residues lysine 3537–leucine 3557 and leucine 4313–glutamate 4333. The tract at residues proline 4569–aspartate 5098 is UBR4 E3 catalytic module. The segment at glycine 4698–alanine 4817 adopts a HemiRING-type zinc-finger fold. Cysteine 4701, cysteine 4704, histidine 4751, and cysteine 4754 together coordinate Zn(2+). The 279-residue stretch at serine 4820 to aspartate 5098 folds into the UZI domain. The segment covering serine 4891–serine 4903 has biased composition (low complexity). The tract at residues serine 4891 to threonine 4915 is disordered.

It belongs to the UBR4 family. Constitutively expressed in roots, rosette leaves, inflorescence stems, and flowers. Present in inflorescence meristems, floral meristems and vascular tissues.

The protein resides in the membrane. Required for auxin efflux and polar auxin transport (PAT) influencing auxin-mediated developmental responses (e.g. cell elongation, apical dominance, lateral root production, inflorescence architecture, general growth and development). Controls the elongation of the pedicels and stem internodes through auxin action. Involved in the expression modulation of light-regulated genes. Represses CAB1 and CAB3 genes expression in etiolated seedlings. Confers sensitivity to the auxin transport inhibitors N-1-naphthylphthalamic acid (NPA), 2-carboxyphenyl-3-phenylpropane-l,2-dione (CPD), and methyl-2-chloro-9-hydroxyfluorene-9-carboxylate (CFM). Influences the polarized subcellular distribution of the auxin transporter PIN1 in response to auxin transport inhibitors. Plays a role in the regulation of responses to phytohormones such as auxin, cytokinins, ethylene and gibberellic acid (GA), particularly during light-mediated stimuli (e.g. shade ovoidance, etiolation). Required for pericycle cell activation to form lateral root primordia (LRP) in both high and low phosphate P conditions. Necessary for the plant-growth promotion and lateral root development mediated by the fungus Trichoderma virens. In Arabidopsis thaliana (Mouse-ear cress), this protein is Auxin transport protein BIG (BIG).